Reading from the N-terminus, the 123-residue chain is UPF0102 protein Psyr_4114 (123 aa).

Belongs to the UPF0102 family.

The chain is UPF0102 protein Psyr_4114 from Pseudomonas syringae pv. syringae (strain B728a).